The sequence spans 467 residues: ATP synthase subunit beta (467 aa).

Position 156-163 (Gly156–Thr163) interacts with ATP.

Belongs to the ATPase alpha/beta chains family. In terms of assembly, F-type ATPases have 2 components, CF(1) - the catalytic core - and CF(0) - the membrane proton channel. CF(1) has five subunits: alpha(3), beta(3), gamma(1), delta(1), epsilon(1). CF(0) has three main subunits: a(1), b(2) and c(9-12). The alpha and beta chains form an alternating ring which encloses part of the gamma chain. CF(1) is attached to CF(0) by a central stalk formed by the gamma and epsilon chains, while a peripheral stalk is formed by the delta and b chains.

It is found in the cell inner membrane. The catalysed reaction is ATP + H2O + 4 H(+)(in) = ADP + phosphate + 5 H(+)(out). Functionally, produces ATP from ADP in the presence of a proton gradient across the membrane. The catalytic sites are hosted primarily by the beta subunits. In Cupriavidus pinatubonensis (strain JMP 134 / LMG 1197) (Cupriavidus necator (strain JMP 134)), this protein is ATP synthase subunit beta.